Consider the following 192-residue polypeptide: Cell division protein SepF (192 aa).

The disordered stretch occupies residues Gly-15 to Ala-70. Residues Leu-18–Glu-28 are compositionally biased toward acidic residues. Basic and acidic residues predominate over residues Gln-29 to Arg-42. Over residues Ala-43–Ala-63 the composition is skewed to low complexity.

It belongs to the SepF family. As to quaternary structure, homodimer. Interacts with FtsZ.

Its subcellular location is the cytoplasm. Its function is as follows. Cell division protein that is part of the divisome complex and is recruited early to the Z-ring. Probably stimulates Z-ring formation, perhaps through the cross-linking of FtsZ protofilaments. Its function overlaps with FtsA. This chain is Cell division protein SepF, found in Gloeobacter violaceus (strain ATCC 29082 / PCC 7421).